We begin with the raw amino-acid sequence, 179 residues long: Outer-membrane lipoprotein carrier protein (179 aa).

A signal peptide spans 1-22 (MEVLRRYVLVFTSLCMTLFAWG).

It belongs to the LolA family. Monomer.

The protein localises to the periplasm. Participates in the translocation of lipoproteins from the inner membrane to the outer membrane. Only forms a complex with a lipoprotein if the residue after the N-terminal Cys is not an aspartate (The Asp acts as a targeting signal to indicate that the lipoprotein should stay in the inner membrane). The polypeptide is Outer-membrane lipoprotein carrier protein (Helicobacter hepaticus (strain ATCC 51449 / 3B1)).